We begin with the raw amino-acid sequence, 487 residues long: Bifunctional protein HldE (487 aa).

A ribokinase region spans residues 1 to 329 (MLHAVETAFY…GALLTDATYE (329 aa)). Residue 204 to 207 (NRGE) coordinates ATP. The active site involves aspartate 274. Residues 356 to 487 (FTNGCFDLLH…GIVQRISAQK (132 aa)) form a cytidylyltransferase region.

In the N-terminal section; belongs to the carbohydrate kinase PfkB family. It in the C-terminal section; belongs to the cytidylyltransferase family. Homodimer.

The catalysed reaction is D-glycero-beta-D-manno-heptose 7-phosphate + ATP = D-glycero-beta-D-manno-heptose 1,7-bisphosphate + ADP + H(+). The enzyme catalyses D-glycero-beta-D-manno-heptose 1-phosphate + ATP + H(+) = ADP-D-glycero-beta-D-manno-heptose + diphosphate. Its pathway is nucleotide-sugar biosynthesis; ADP-L-glycero-beta-D-manno-heptose biosynthesis; ADP-L-glycero-beta-D-manno-heptose from D-glycero-beta-D-manno-heptose 7-phosphate: step 1/4. It participates in nucleotide-sugar biosynthesis; ADP-L-glycero-beta-D-manno-heptose biosynthesis; ADP-L-glycero-beta-D-manno-heptose from D-glycero-beta-D-manno-heptose 7-phosphate: step 3/4. Functionally, catalyzes the phosphorylation of D-glycero-D-manno-heptose 7-phosphate at the C-1 position to selectively form D-glycero-beta-D-manno-heptose-1,7-bisphosphate. Catalyzes the ADP transfer from ATP to D-glycero-beta-D-manno-heptose 1-phosphate, yielding ADP-D-glycero-beta-D-manno-heptose. This Magnetococcus marinus (strain ATCC BAA-1437 / JCM 17883 / MC-1) protein is Bifunctional protein HldE.